Consider the following 96-residue polypeptide: MNIRPLHDRVIVKRVEAERTTASGIVIPDSAGEKPDQGEVLAVGPGKRDDNGKQIALDVKVGDRVLFGKYAGQAVKVDGQEVLVMREEDIMGVLVA.

Belongs to the GroES chaperonin family. Heptamer of 7 subunits arranged in a ring. Interacts with the chaperonin GroEL.

It localises to the cytoplasm. Together with the chaperonin GroEL, plays an essential role in assisting protein folding. The GroEL-GroES system forms a nano-cage that allows encapsulation of the non-native substrate proteins and provides a physical environment optimized to promote and accelerate protein folding. GroES binds to the apical surface of the GroEL ring, thereby capping the opening of the GroEL channel. The chain is Co-chaperonin GroES from Dechloromonas aromatica (strain RCB).